The primary structure comprises 314 residues: NGFGRIGRNFLRCLETRQNSLLEVIAINDSGGVKQASHLLKYDSTLGKFDADVKIVDDGHISVNGKSIRVVSSRDPTKLPWGEMEIDLVIEGTGVFIDTPGASKHIEAGAKKVLITAPAKGSDIPTYVVGVNAHDYKHSDAIISNASCTTNCLAPFVKVLDEKFGIVKGTMTNTHSYTGDQRLLDASHRDLRRARAAALNIVPTTTGAAKAVALVLPKLKGKLNGIALRVPTPNVSVVDLVVQVEKKTFAEEINNAFKEAAAGSLNGVLAVSDEPLVSVDFRCTDVSSTIDSSLTMVMGADMVKVVAWYDNEWG.

Residues 5–6 (RI), Asp29, and Arg74 each bind NADP(+). Residues Cys13 and Cys283 are joined by a disulfide bond. D-glyceraldehyde 3-phosphate is bound by residues 147–149 (SCT), Thr178, Arg193, 206–207 (TG), and Arg229. Residue Cys148 is the Nucleophile of the active site. Asn311 is a binding site for NADP(+).

The protein belongs to the glyceraldehyde-3-phosphate dehydrogenase family. In terms of assembly, homotetramer.

It is found in the plastid. Its subcellular location is the chloroplast. The catalysed reaction is D-glyceraldehyde 3-phosphate + phosphate + NADP(+) = (2R)-3-phospho-glyceroyl phosphate + NADPH + H(+). The protein operates within carbohydrate biosynthesis; Calvin cycle. This Scenedesmus vacuolatus (Green alga) protein is Glyceraldehyde-3-phosphate dehydrogenase A, chloroplastic (GapA).